Reading from the N-terminus, the 469-residue chain is L-seryl-tRNA(Sec) selenium transferase (469 aa).

The residue at position 295 (K295) is an N6-(pyridoxal phosphate)lysine.

The protein belongs to the SelA family. The cofactor is pyridoxal 5'-phosphate.

Its subcellular location is the cytoplasm. It carries out the reaction L-seryl-tRNA(Sec) + selenophosphate + H(+) = L-selenocysteinyl-tRNA(Sec) + phosphate. It participates in aminoacyl-tRNA biosynthesis; selenocysteinyl-tRNA(Sec) biosynthesis; selenocysteinyl-tRNA(Sec) from L-seryl-tRNA(Sec) (bacterial route): step 1/1. Functionally, converts seryl-tRNA(Sec) to selenocysteinyl-tRNA(Sec) required for selenoprotein biosynthesis. This Methylocella silvestris (strain DSM 15510 / CIP 108128 / LMG 27833 / NCIMB 13906 / BL2) protein is L-seryl-tRNA(Sec) selenium transferase.